An 855-amino-acid polypeptide reads, in one-letter code: Cytosolic phospholipase A2 zeta (855 aa).

The C2 domain occupies 27-145 (EKSEPQWKHR…QLGQPCTKNF (119 aa)). Ca(2+)-binding residues include aspartate 60, aspartate 66, aspartate 116, aspartate 118, and aspartate 123. A PLA2c domain is found at 304–855 (MSSSGDLDLR…RRQAGGRVGG (552 aa)). The active-site Nucleophile is serine 393. Catalysis depends on aspartate 685, which acts as the Proton acceptor.

Requires Ca(2+) as cofactor. Strongly expressed in thyroid, expressed at intermediate level in stomach and at very low level in large intestine and prostate.

It is found in the cytoplasm. It localises to the cytosol. The protein resides in the cell membrane. The protein localises to the mitochondrion. It catalyses the reaction a 1,2-diacyl-sn-glycero-3-phosphocholine + H2O = a 1-acyl-sn-glycero-3-phosphocholine + a fatty acid + H(+). It carries out the reaction a 1-O-alkyl-2-acyl-sn-glycero-3-phosphocholine + H2O = a 1-O-alkyl-sn-glycero-3-phosphocholine + a fatty acid + H(+). The catalysed reaction is 1-hexadecanoyl-2-(9Z-octadecenoyl)-sn-glycero-3-phosphocholine + H2O = 2-(9Z-octadecenoyl)-sn-glycero-3-phosphocholine + hexadecanoate + H(+). The enzyme catalyses 1-hexadecanoyl-2-(9Z,12Z-octadecadienoyl)-sn-glycero-3-phosphocholine + H2O = (9Z,12Z)-octadecadienoate + 1-hexadecanoyl-sn-glycero-3-phosphocholine + H(+). It catalyses the reaction 1-hexadecanoyl-2-(5Z,8Z,11Z,14Z-eicosatetraenoyl)-sn-glycero-3-phosphocholine + H2O = 1-hexadecanoyl-sn-glycero-3-phosphocholine + (5Z,8Z,11Z,14Z)-eicosatetraenoate + H(+). It carries out the reaction 1-hexadecanoyl-2-(9Z,12Z-octadecadienoyl)-sn-glycero-3-phosphoethanolamine + H2O = 1-hexadecanoyl-sn-glycero-3-phosphoethanolamine + (9Z,12Z)-octadecadienoate + H(+). The catalysed reaction is 1-hexadecanoyl-2-(5Z,8Z,11Z,14Z-eicosatetraenoyl)-sn-glycero-3-phosphoethanolamine + H2O = 1-hexadecanoyl-sn-glycero-3-phosphoethanolamine + (5Z,8Z,11Z,14Z)-eicosatetraenoate + H(+). The enzyme catalyses 1-(5Z,8Z,11Z,14Z-eicosatetraenoyl)-2-O-hexadecyl-sn-glycero-3-phosphocholine + H2O = 2-O-hexadecyl-sn-glycero-3-phosphocholine + (5Z,8Z,11Z,14Z)-eicosatetraenoate + H(+). It catalyses the reaction 1-O-hexadecyl-2-(5Z,8Z,11Z,14Z)-eicosatetraenoyl-sn-glycero-3-phosphocholine + H2O = 1-O-hexadecyl-sn-glycero-3-phosphocholine + (5Z,8Z,11Z,14Z)-eicosatetraenoate + H(+). It carries out the reaction 1-hexadecanoyl-sn-glycero-3-phosphocholine + H2O = sn-glycerol 3-phosphocholine + hexadecanoate + H(+). With respect to regulation, stimulated by cytosolic Ca(2+). Its function is as follows. Has calcium-dependent phospholipase and lysophospholipase activities with a potential role in membrane lipid remodeling and biosynthesis of lipid mediators. Preferentially hydrolyzes the ester bond of the fatty acyl group attached at sn-2 position of phospholipids (phospholipase A2 activity). Selectively hydrolyzes sn-2 arachidonoyl group from membrane phospholipids, providing the precursor for eicosanoid biosynthesis. In myocardial mitochondria, plays a major role in arachidonate release that is metabolically channeled to the formation of cardioprotective eicosanoids, epoxyeicosatrienoates (EETs). The sequence is that of Cytosolic phospholipase A2 zeta (Pla2g4f) from Mus musculus (Mouse).